A 270-amino-acid polypeptide reads, in one-letter code: tRNA pseudouridine synthase B (270 aa).

Residue aspartate 49 is the Nucleophile of the active site.

Belongs to the pseudouridine synthase TruB family. Type 1 subfamily.

It carries out the reaction uridine(55) in tRNA = pseudouridine(55) in tRNA. In terms of biological role, responsible for synthesis of pseudouridine from uracil-55 in the psi GC loop of transfer RNAs. The chain is tRNA pseudouridine synthase B from Bartonella quintana (strain Toulouse) (Rochalimaea quintana).